Reading from the N-terminus, the 131-residue chain is Large ribosomal subunit protein bL19 (131 aa).

Belongs to the bacterial ribosomal protein bL19 family.

In terms of biological role, this protein is located at the 30S-50S ribosomal subunit interface and may play a role in the structure and function of the aminoacyl-tRNA binding site. The sequence is that of Large ribosomal subunit protein bL19 from Rhodopseudomonas palustris (strain HaA2).